The primary structure comprises 115 residues: Con-Ins T1B (115 aa).

A signal peptide spans 1–24; sequence MTTSFYFLLMALGLLLYVCQSSFG. A propeptide spanning residues 25–29 is cleaved from the precursor; the sequence is NQHTR. Residue P34 is modified to 4-hydroxyproline; partial. Disulfide bonds link C38-C101, C50-C114, and C100-C105. The propeptide at 52 to 94 is c peptide; sequence RKRNDAGKKRGQASPLWQRGGSLSMLKARAKRNEAFHLQRAHR. E98 carries the post-translational modification 4-carboxyglutamate. P104 is subject to 4-hydroxyproline; partial. A 4-carboxyglutamate; partial modification is found at E109. C114 is modified (cysteine amide).

This sequence belongs to the insulin family. Heterodimer of A and B chains; disulfide-linked. Expressed by the venom gland.

The protein resides in the secreted. Its function is as follows. This venom insulin, from a fish-hunting cone snail, facilitates prey capture by rapidly inducing hypoglycemic shock. It is one of the smallest known insulin found in nature and lacks the C-terminal segment of the B chain that, in human insulin, mediates engagement of the insulin receptor (INSR) and assembly of the hormone's hexameric storage form. Despite lacking this segment, it both binds and activates human insulin receptor (long isoform (HIR-B) of INSR) with a high potency (EC(50)=12.0 nM). In vivo, intraperitoneal injection of this peptide into zebrafish lowers blood glucose with a lower potency than human insulin. In addition, when applied to water, this peptide reduces overall locomotor activity of zebrafish larvae, observed as a significant decrease in the percentage of time spent swimming and movement frequency. When tested on a mouse model of diabetes, this insulin also lowers blood glucose with a 10-fold lower potency than human insulin. This Conus tulipa (Fish-hunting cone snail) protein is Con-Ins T1B.